The following is a 907-amino-acid chain: Alanine--tRNA ligase (907 aa).

Residues His-581, His-585, Cys-683, and His-687 each coordinate Zn(2+).

It belongs to the class-II aminoacyl-tRNA synthetase family. Zn(2+) is required as a cofactor.

It is found in the cytoplasm. It catalyses the reaction tRNA(Ala) + L-alanine + ATP = L-alanyl-tRNA(Ala) + AMP + diphosphate. Functionally, catalyzes the attachment of alanine to tRNA(Ala) in a two-step reaction: alanine is first activated by ATP to form Ala-AMP and then transferred to the acceptor end of tRNA(Ala). Also edits incorrectly charged Ser-tRNA(Ala) and Gly-tRNA(Ala) via its editing domain. The sequence is that of Alanine--tRNA ligase from Bdellovibrio bacteriovorus (strain ATCC 15356 / DSM 50701 / NCIMB 9529 / HD100).